Reading from the N-terminus, the 86-residue chain is Mitochondrial import inner membrane translocase subunit Tim10 (86 aa).

Residues 29–54 (CQAKCIATAFKESELTKGEAVCLDRC) carry the Twin CX3C motif motif. 2 disulfide bridges follow: C29-C54 and C33-C50.

Belongs to the small Tim family. As to quaternary structure, heterohexamer; composed of 3 copies of tim-9/tin-9.1 and 3 copies of tim-10/tin-10, named soluble 70 kDa complex. The complex associates with the tim-22 component of the TIM22 complex. Interacts with multi-pass transmembrane proteins in transit.

It is found in the mitochondrion inner membrane. In terms of biological role, mitochondrial intermembrane chaperone that participates in the import and insertion of multi-pass transmembrane proteins into the mitochondrial inner membrane. May also be required for the transfer of beta-barrel precursors from the TOM complex to the sorting and assembly machinery (SAM complex) of the outer membrane. Acts as a chaperone-like protein that protects the hydrophobic precursors from aggregation and guide them through the mitochondrial intermembrane space. The polypeptide is Mitochondrial import inner membrane translocase subunit Tim10 (tin-10) (Caenorhabditis briggsae).